Here is a 138-residue protein sequence, read N- to C-terminus: Large ribosomal subunit protein uL16 (138 aa).

Over residues 1–19 the composition is skewed to basic residues; sequence MLIPRKVAHRKQHHPKRTG. The disordered stretch occupies residues 1–22; the sequence is MLIPRKVAHRKQHHPKRTGAAK.

It belongs to the universal ribosomal protein uL16 family. Part of the 50S ribosomal subunit.

In terms of biological role, binds 23S rRNA and is also seen to make contacts with the A and possibly P site tRNAs. The sequence is that of Large ribosomal subunit protein uL16 from Parafrankia sp. (strain EAN1pec).